Reading from the N-terminus, the 992-residue chain is RNA-binding motif protein, X-linked-like-3 (992 aa).

The RRM domain occupies 8 to 86 (EKLFVGGLNL…KAIMVAQTIK (79 aa)). Disordered stretches follow at residues 91 to 130 (SSRWVPPTPGSGSRSRFSHRTRGGGSSPQRPPSQGRPDDG), 144 to 169 (APMPRKRGPPPRHCASPPHKRRDPGD), 188 to 207 (PDYCPXRGDGNRNGYRGRDH), 278 to 385 (DHLP…DSSS), 397 to 511 (EEYQ…HRYR), 562 to 588 (SLDANSGGRSPNAYSGGHDSSSRSHRY), and 644 to 992 (NSGG…QSRY). Over residues 284-296 (YSGGRSSSSNSYS) the composition is skewed to low complexity. A compositionally biased stretch (basic and acidic residues) spans 297-316 (RSDRYGEEGCYEEYRGRSPD). Low complexity predominate over residues 318–334 (HSGGRNSSSNSYGQSHH). The segment covering 335 to 371 (YGGEGRYEEYRGRYEEYRGRSHEARSGGRSTDAHSGG) has biased composition (basic and acidic residues). Residues 454–471 (THSGGRSSSSNSYGQSHR) show a composition bias toward low complexity. Residues 472–488 (YGGEGHYEYRGRSHDAH) are compositionally biased toward basic and acidic residues. 3 stretches are compositionally biased toward polar residues: residues 564–574 (DANSGGRSPNA), 644–664 (NSGGCSPNAYSGGHDSSSQSH), and 752–774 (DANSGGRSPNAYSGGRDSSSNSY). A compositionally biased stretch (basic and acidic residues) spans 785–798 (HYEEYRGRSHDTHS). Positions 818 to 828 (GRNSFSNSYGQ) are enriched in polar residues. 3 stretches are compositionally biased toward basic and acidic residues: residues 831–842 (HYGRGGRYEEYQ), 920–948 (SGDHDRSSNSYGRSDRYSRGRDRVGRPDR), and 981–992 (GRFERGEGQSRY).

The chain is RNA-binding motif protein, X-linked-like-3 (RBMXL3) from Pan troglodytes (Chimpanzee).